Consider the following 693-residue polypeptide: DNA ligase (693 aa).

Residues 45–49 (DSEYD), 94–95 (SI), and Glu-131 contribute to the NAD(+) site. Lys-133 functions as the N6-AMP-lysine intermediate in the catalytic mechanism. NAD(+) contacts are provided by Arg-154, Glu-190, Lys-307, and Lys-331. Zn(2+) contacts are provided by Cys-429, Cys-432, Cys-447, and Cys-453. In terms of domain architecture, BRCT spans 615-693 (ASSSKLEGKT…EEGLLSLLAE (79 aa)).

This sequence belongs to the NAD-dependent DNA ligase family. LigA subfamily. Mg(2+) is required as a cofactor. The cofactor is Mn(2+).

It carries out the reaction NAD(+) + (deoxyribonucleotide)n-3'-hydroxyl + 5'-phospho-(deoxyribonucleotide)m = (deoxyribonucleotide)n+m + AMP + beta-nicotinamide D-nucleotide.. DNA ligase that catalyzes the formation of phosphodiester linkages between 5'-phosphoryl and 3'-hydroxyl groups in double-stranded DNA using NAD as a coenzyme and as the energy source for the reaction. It is essential for DNA replication and repair of damaged DNA. The sequence is that of DNA ligase from Methylobacillus flagellatus (strain ATCC 51484 / DSM 6875 / VKM B-1610 / KT).